The sequence spans 153 residues: Histone H2B.3 (153 aa).

Composition is skewed to basic and acidic residues over residues 1-28 and 36-53; these read MAPK…EKAL and EKRL…EGRK. The disordered stretch occupies residues 1–61; the sequence is MAPKAEKKPA…RKAGRKKAKK (61 aa). K7 and K37 each carry N6-acetyllysine. K149 is covalently cross-linked (Glycyl lysine isopeptide (Lys-Gly) (interchain with G-Cter in ubiquitin)).

It belongs to the histone H2B family. As to quaternary structure, the nucleosome is a histone octamer containing two molecules each of H2A, H2B, H3 and H4 assembled in one H3-H4 heterotetramer and two H2A-H2B heterodimers. The octamer wraps approximately 147 bp of DNA. Can be acetylated to form H2BK6ac and H2BK33ac. Post-translationally, monoubiquitinated by BRE1 to form H2BK143ub1 and deubiquitinated by UBP26. Required for heterochromatic histone H3 di- and trimethylation at H3K4me. May give a specific tag for epigenetic transcriptional activation.

The protein resides in the nucleus. It localises to the chromosome. Functionally, core component of nucleosome. Nucleosomes wrap and compact DNA into chromatin, limiting DNA accessibility to the cellular machineries which require DNA as a template. Histones thereby play a central role in transcription regulation, DNA repair, DNA replication and chromosomal stability. DNA accessibility is regulated via a complex set of post-translational modifications of histones, also called histone code, and nucleosome remodeling. The protein is Histone H2B.3 (H2B.3) of Oryza sativa subsp. indica (Rice).